The primary structure comprises 139 residues: Peptide methionine sulfoxide reductase B5 (139 aa).

The residue at position 2 (Ala-2) is an N-acetylalanine. Residues 12-133 (EEEWRAVLSP…NSVSISFNPA (122 aa)) form the MsrB domain. Positions 51, 54, 97, and 100 each coordinate Zn(2+). Cysteines 69 and 122 form a disulfide. Cys-122 serves as the catalytic Nucleophile.

It belongs to the MsrB Met sulfoxide reductase family. It depends on Zn(2+) as a cofactor.

The protein localises to the cytoplasm. Its subcellular location is the cytosol. It catalyses the reaction L-methionyl-[protein] + [thioredoxin]-disulfide + H2O = L-methionyl-(R)-S-oxide-[protein] + [thioredoxin]-dithiol. Its function is as follows. Catalyzes the reduction of methionine sulfoxide (MetSO) to methionine in proteins. Plays a protective role against oxidative stress by restoring activity to proteins that have been inactivated by methionine oxidation. MSRB family specifically reduces the MetSO R-enantiomer. The chain is Peptide methionine sulfoxide reductase B5 (MSRB5) from Arabidopsis thaliana (Mouse-ear cress).